Consider the following 274-residue polypeptide: Nitrogenase iron protein (274 aa).

8-15 (GKGGIGKS) provides a ligand contact to ATP. Cysteine 94 provides a ligand contact to [4Fe-4S] cluster. An ADP-ribosylarginine; by dinitrogenase reductase ADP-ribosyltransferase modification is found at arginine 97. Cysteine 129 is a [4Fe-4S] cluster binding site.

It belongs to the NifH/BchL/ChlL family. In terms of assembly, homodimer. The cofactor is [4Fe-4S] cluster. In terms of processing, the reversible ADP-ribosylation of Arg-97 inactivates the nitrogenase reductase and regulates nitrogenase activity.

It catalyses the reaction N2 + 8 reduced [2Fe-2S]-[ferredoxin] + 16 ATP + 16 H2O = H2 + 8 oxidized [2Fe-2S]-[ferredoxin] + 2 NH4(+) + 16 ADP + 16 phosphate + 6 H(+). The key enzymatic reactions in nitrogen fixation are catalyzed by the nitrogenase complex, which has 2 components: the iron protein and the molybdenum-iron protein. This is Nitrogenase iron protein from Methanocella arvoryzae (strain DSM 22066 / NBRC 105507 / MRE50).